The sequence spans 325 residues: MTSHLLKAEIHCHLEGAAPPALVVKQAEKYGIDTSGFLRDGQYVWSDFAEFIQCYDAVAQVFKSDEDYAVLTETYLTELAEANTIYSELIISPDHGDRIGLGADAYLAGVAEGIRIAKEKTGIETRIIVTGERHFGPERVIAAAEYAARIRHPLVTGFNMAGEERMGRVADYARAFDIARDAGLGLTIHAGEVCGPESVADALDLVKPSRIGHGVRAIEDAALISRLVETGTVLEVCPGSNIALSVYPDFASHPLKALSDAGVRVCISSDDPPFFFTSLAREYALAADAFGFNDAEINRMTRTALECAFVDEATRERLLARLGDA.

Zn(2+)-binding residues include His11, His13, and His189. Residue Glu192 is the Proton donor of the active site. Asp270 provides a ligand contact to Zn(2+). A substrate-binding site is contributed by Asp271.

Belongs to the metallo-dependent hydrolases superfamily. Adenosine and AMP deaminases family. Adenine deaminase type 2 subfamily. Zn(2+) is required as a cofactor.

The catalysed reaction is adenine + H2O + H(+) = hypoxanthine + NH4(+). In terms of biological role, catalyzes the hydrolytic deamination of adenine to hypoxanthine. Plays an important role in the purine salvage pathway and in nitrogen catabolism. This chain is Adenine deaminase, found in Agrobacterium fabrum (strain C58 / ATCC 33970) (Agrobacterium tumefaciens (strain C58)).